Consider the following 207-residue polypeptide: Suppressor of IKBKE 1 (207 aa).

2 coiled-coil regions span residues 70 to 102 (HILL…DALE) and 162 to 193 (QFCK…SLQA).

Belongs to the SIKE family. In terms of assembly, interacts with IKBKE and TBK1 via its coiled coil region. Interaction with TBK1 is disrupted upon viral infection or TLR3 stimulation. Interacts with CDC42BPB. Interacts with SIKE1 which mediates association with the STRIPAK core complex composed of PP2A catalytic and scaffolding subunits, the striatins (PP2A regulatory subunits), the striatin-associated proteins MOB4, STRIP1 and STRIP2, PDCD10 and members of the STE20 kinases, such as STK24 and STK26. Widely expressed. Expressed in brain, heart, skeletal muscle, colon, thymus, spleen, kidney, liver, small intestine, placenta, lung and leukocytes. Present in all cell lines tested (at protein level).

The protein localises to the cytoplasm. Functionally, physiological suppressor of IKK-epsilon and TBK1 that plays an inhibitory role in virus- and TLR3-triggered IRF3. Inhibits TLR3-mediated activation of interferon-stimulated response elements (ISRE) and the IFN-beta promoter. May act by disrupting the interactions of IKBKE or TBK1 with TICAM1/TRIF, IRF3 and RIGI. Does not inhibit NF-kappa-B activation pathways. Associates with the striatin-interacting phosphatase and kinase (STRIPAK) core complex, forming the extended (SIKE1:SLMAP)STRIPAK complex. The (SIKE1:SLMAP)STRIPAK complex dephosphorylates STK3 leading to the inhibition of Hippo signaling and the control of cell growth. In Homo sapiens (Human), this protein is Suppressor of IKBKE 1.